Here is a 75-residue protein sequence, read N- to C-terminus: Sec-independent protein translocase protein TatA (75 aa).

A helical transmembrane segment spans residues 1–21; sequence MGSFSIWHWLVVLAIVLLVFG. The segment at 40–75 is disordered; sequence KKGMRDEDKPNAQLGDESRSQDASRTAQDEHDRTPR.

The protein belongs to the TatA/E family. The Tat system comprises two distinct complexes: a TatABC complex, containing multiple copies of TatA, TatB and TatC subunits, and a separate TatA complex, containing only TatA subunits. Substrates initially bind to the TatABC complex, which probably triggers association of the separate TatA complex to form the active translocon.

Its subcellular location is the cell inner membrane. Part of the twin-arginine translocation (Tat) system that transports large folded proteins containing a characteristic twin-arginine motif in their signal peptide across membranes. TatA could form the protein-conducting channel of the Tat system. The polypeptide is Sec-independent protein translocase protein TatA (Stenotrophomonas maltophilia (strain R551-3)).